We begin with the raw amino-acid sequence, 298 residues long: Protease HtpX homolog (298 aa).

2 consecutive transmembrane segments (helical) span residues 5–25 (IFLF…VLSV) and 45–65 (MALL…SLAI). Zn(2+) is bound at residue His-155. Glu-156 is an active-site residue. His-159 is a binding site for Zn(2+). The next 2 membrane-spanning stretches (helical) occupy residues 170–190 (LLQG…AWIA) and 204–224 (FIAM…VVFA). Glu-230 serves as a coordination point for Zn(2+).

Belongs to the peptidase M48B family. Requires Zn(2+) as cofactor.

It localises to the cell membrane. This is Protease HtpX homolog from Bacillus subtilis (strain 168).